The sequence spans 376 residues: Beta-centractin (376 aa).

Methionine 1 bears the N-acetylmethionine mark. The residue at position 4 (tyrosine 4) is a 3'-nitrotyrosine.

This sequence belongs to the actin family. ARP1 subfamily.

The protein localises to the cytoplasm. The protein resides in the cytoskeleton. It is found in the microtubule organizing center. It localises to the centrosome. Component of a multi-subunit complex involved in microtubule based vesicle motility. It is associated with the centrosome. This is Beta-centractin (Actr1b) from Mus musculus (Mouse).